Reading from the N-terminus, the 270-residue chain is uncharacterized protein (270 aa).

This is an uncharacterized protein from Archaeoglobus fulgidus (strain ATCC 49558 / DSM 4304 / JCM 9628 / NBRC 100126 / VC-16).